The chain runs to 659 residues: RNA-binding protein MIP6 (659 aa).

Polar residues predominate over residues 1–27 (MPNSHGNVLNNISLNSKQNPRSISKSC). The interval 1–35 (MPNSHGNVLNNISLNSKQNPRSISKSCPNDKDARQ) is disordered. RRM domains lie at 111–189 (NSLF…PSMK), 199–267 (TNVF…GNKI), and 313–389 (KTIL…PGKD).

As to quaternary structure, interacts with MEX67.

The protein resides in the cytoplasm. The polypeptide is RNA-binding protein MIP6 (MIP6) (Saccharomyces cerevisiae (strain ATCC 204508 / S288c) (Baker's yeast)).